We begin with the raw amino-acid sequence, 522 residues long: Sorting nexin-1 (522 aa).

2 disordered regions span residues 1–89 (MASG…QDLF) and 115–142 (SLPP…QEDQ). Serine 32 and serine 39 each carry phosphoserine. The segment covering 35–45 (EAGDSDTEGED) has biased composition (acidic residues). Threonine 41 and threonine 48 each carry phosphothreonine. Phosphoserine occurs at positions 58 and 72. Positions 60–73 (KRTTSLLPINNGSK) are enriched in polar residues. The segment covering 132–142 (EELEEEEQEDQ) has biased composition (acidic residues). In terms of domain architecture, PX spans 143 to 272 (FDLTVGITDP…EFLEKEELPR (130 aa)). A 1,2-diacyl-sn-glycero-3-phospho-(1D-myo-inositol-3-phosphate) is bound by residues arginine 186, serine 188, and lysine 214. The residue at position 188 (serine 188) is a Phosphoserine. Residue lysine 237 is modified to N6-acetyllysine. Arginine 238 provides a ligand contact to a 1,2-diacyl-sn-glycero-3-phospho-(1D-myo-inositol-3-phosphate). Serine 280 carries the post-translational modification Phosphoserine. Positions 281-298 (GAGLLKMFNKATDAVSKM) are membrane-binding amphipathic helix. The BAR domain maps to 302–522 (MNESDIWFEE…AFLPEAKAIS (221 aa)).

It belongs to the sorting nexin family. Predominantly forms heterodimers with BAR domain-containing sorting nexins SNX5, SNX6 and SNX32; can self-associate to form homodimers. The heterodimers are proposed to self-assemble into helical arrays on the membrane to stabilize and expand local membrane curvature underlying endosomal tubule formation. Thought to be a component of the originally described retromer complex (also called SNX-BAR retromer) which is a pentamer containing the heterotrimeric retromer cargo-selective complex (CSC), also described as vacuolar protein sorting subcomplex (VPS) and a heterodimeric membrane-deforming subcomplex formed between SNX1 or SNX2 and SNX5 or SNX6 (also called SNX-BAR subcomplex); the respective CSC and SNX-BAR subcomplexes associate with low affinity. Interacts with SNX5, SNX6, SNX32, VPS26A, VPS29, VPS35, DRD5, DENND5A, KALRN, RHOG (GDP-bound form). The interaction with SNX2 is reported controversially. Interacts with DNAJC13; prevented by presence of HGS. Interacts with HGS.

The protein localises to the endosome membrane. It localises to the golgi apparatus. It is found in the trans-Golgi network membrane. The protein resides in the early endosome membrane. Its subcellular location is the cell projection. The protein localises to the lamellipodium. Involved in several stages of intracellular trafficking. Interacts with membranes containing phosphatidylinositol 3-phosphate (PtdIns(3P)) or phosphatidylinositol 3,5-bisphosphate (PtdIns(3,5)P2). Acts in part as component of the retromer membrane-deforming SNX-BAR subcomplex. The SNX-BAR retromer mediates retrograde transport of cargo proteins from endosomes to the trans-Golgi network (TGN) and is involved in endosome-to-plasma membrane transport for cargo protein recycling. The SNX-BAR subcomplex functions to deform the donor membrane into a tubular profile called endosome-to-TGN transport carrier (ETC). Can sense membrane curvature and has in vitro vesicle-to-membrane remodeling activity. Involved in retrograde endosome-to-TGN transport of lysosomal enzyme receptors (IGF2R, M6PR and SORT1). Plays a role in targeting ligand-activated EGFR to the lysosomes for degradation after endocytosis from the cell surface and release from the Golgi. Involvement in retromer-independent endocytic trafficking of P2RY1 and lysosomal degradation of protease-activated receptor-1/F2R. Promotes KALRN- and RHOG-dependent but retromer-independent membrane remodeling such as lamellipodium formation; the function is dependent on GEF activity of KALRN. Required for endocytosis of DRD5 upon agonist stimulation but not for basal receptor trafficking. The sequence is that of Sorting nexin-1 (SNX1) from Macaca fascicularis (Crab-eating macaque).